A 472-amino-acid polypeptide reads, in one-letter code: NALCN channel auxiliary factor 2 (472 aa).

A helical transmembrane segment spans residues 47–67; sequence LASLLFFTVLLADHLWLCAGA. Residues 77-114 form a disordered region; the sequence is AMRPPWGAGRERQPVPPRAVLPLPPPPPGEPSAPPGTC. Positions 90–110 are enriched in pro residues; that stretch reads PVPPRAVLPLPPPPPGEPSAP. Asparagine 120 and asparagine 193 each carry an N-linked (GlcNAc...) asparagine glycan. A helical transmembrane segment spans residues 433–453; sequence LCVLVLMLLHTVVSFSSNQGG.

The protein belongs to the NALF family.

The protein localises to the membrane. Probable component of the NALCN channel complex, a channel that regulates the resting membrane potential and controls neuronal excitability. The polypeptide is NALCN channel auxiliary factor 2 (Homo sapiens (Human)).